We begin with the raw amino-acid sequence, 216 residues long: N-(5'-phosphoribosyl)anthranilate isomerase (216 aa).

The protein belongs to the TrpF family.

It catalyses the reaction N-(5-phospho-beta-D-ribosyl)anthranilate = 1-(2-carboxyphenylamino)-1-deoxy-D-ribulose 5-phosphate. Its pathway is amino-acid biosynthesis; L-tryptophan biosynthesis; L-tryptophan from chorismate: step 3/5. The chain is N-(5'-phosphoribosyl)anthranilate isomerase from Leptospira borgpetersenii serovar Hardjo-bovis (strain JB197).